The following is a 740-amino-acid chain: Zn(2)-C6 fungal-type transcription factor mpsB (740 aa).

The zn(2)-C6 fungal-type DNA-binding region spans 25–46 (RLKCDRNQPCSTCSHRGLSFSC). The tract at residues 625–645 (SISTPSHDQDDLDGEAATEAT) is disordered.

It is found in the nucleus. Its function is as follows. Transcription factor; part of the gene cluster that mediates the biosynthesis of macrophasetins, 3-decalinoyltetramic acids (DTAs) which feature a tetramate (pyrrolidine-2,4-dione) unit connected to a decalin fragment and that have potent bioactivities. This chain is Zn(2)-C6 fungal-type transcription factor mpsB, found in Macrophomina phaseolina (strain MS6) (Charcoal rot fungus).